Here is a 618-residue protein sequence, read N- to C-terminus: Prothrombin (618 aa).

The signal sequence occupies residues 1–24 (MSHVRGLGLPGCLALAALVSLVHS). A propeptide spanning residues 25–43 (QHVFLAPQQALSLLQRVRR) is cleaved from the precursor. The Gla domain occupies 44–90 (ANSGFLEELRKGNLERECVEEQCSYEEAFEALESPQDTDVFWAKYTV). Glu-50, Glu-51, Glu-58, Glu-60, Glu-63, Glu-64, Glu-69, Glu-70, Glu-73, and Glu-76 each carry 4-carboxyglutamate. A disulfide bridge links Cys-61 with Cys-66. Cystine bridges form between Cys-91-Cys-104, Cys-109-Cys-187, Cys-130-Cys-170, Cys-158-Cys-182, Cys-215-Cys-293, Cys-236-Cys-276, Cys-264-Cys-288, Cys-333-Cys-479, Cys-388-Cys-404, and Cys-533-Cys-547. Kringle domains follow at residues 109-187 (CAMD…VPVC) and 215-292 (CLTE…NLNY). Residues Asn-122 and Asn-144 are each glycosylated (N-linked (GlcNAc...) asparagine). Residues 361–615 (IVEGWDAEKG…LKRWIQKVID (255 aa)) enclose the Peptidase S1 domain. His-403 acts as the Charge relay system in catalysis. Asn-413 is a glycosylation site (N-linked (GlcNAc...) asparagine). The Charge relay system role is filled by Asp-459. Residues 548–570 (AGFKVNDTKRGDACEGDSGGPFV) are high affinity receptor-binding region which is also known as the TP508 peptide. An N-linked (GlcNAc...) asparagine glycan is attached at Asn-553. A disulfide bond links Cys-561 and Cys-591. The active-site Charge relay system is the Ser-565.

It belongs to the peptidase S1 family. Heterodimer (named alpha-thrombin) of a light and a heavy chain; disulfide-linked. Forms a heterodimer with SERPINA5. In plasma, interacts (via N-terminus) with alpha-1-microglobulin; this interaction does not prevent the activation of prothrombin to thrombin. In terms of processing, the gamma-carboxyglutamyl residues, which bind calcium ions, result from the carboxylation of glutamyl residues by a microsomal enzyme, the vitamin K-dependent carboxylase. The modified residues are necessary for the calcium-dependent interaction with a negatively charged phospholipid surface, which is essential for the conversion of prothrombin to thrombin. Post-translationally, in the penultimate step of the coagulation cascade, prothrombin is converted to thrombin by the prothrombinase complex composed of factor Xa (F10), cofactor Va (F5), and phospholipids. This activation requires factor Xa-catalyzed sequential cleavage at 2 sites, Arg-311 and Arg-360, along 2 possible pathways. In the first pathway, the first cleavage occurs at Arg-311, leading to the formation of the inactive intermediate prethrombin-2. This pathway preferentially occurs on platelets and in the absence of cofactor Va. In the second pathway, the first cleavage occurs at Arg-360, which separates protease domain into 2 chains that remain connected through a disulfide bond and generates the active intermediate meizothrombin. The presence of cofactor Va directs activation along the meizothrombin pathway and greatly accelerates the rate of cleavage at Arg-360, but has a smaller effect on the cleavage of meizothrombin at Arg-311. Meizothrombin accumulates as an intermediate when prothrombinase is assembled on the membrane of red blood cells.

The catalysed reaction is Selective cleavage of Arg-|-Gly bonds in fibrinogen to form fibrin and release fibrinopeptides A and B.. Activity is promoted in the presence of negatively charged surfaces, such as polyphosphate and dextran sulfate. Inhibited by SERPINA5. Thrombin, which cleaves bonds after Arg and Lys, converts fibrinogen to fibrin and activates factors V, VII, VIII, XIII, and, in complex with thrombomodulin, protein C. Functions in blood homeostasis, inflammation and wound healing. Activates coagulation factor XI (F11); activation is promoted by the contact with negatively charged surfaces. Triggers the production of pro-inflammatory cytokines, such as MCP-1/CCL2 and IL8/CXCL8, in endothelial cells. This Mus musculus (Mouse) protein is Prothrombin (F2).